We begin with the raw amino-acid sequence, 184 residues long: Putative YfeABCD regulator YfeE (184 aa).

Transmembrane regions (helical) follow at residues 15–35 (IAGW…IINF), 84–104 (LSAG…GLSL), and 162–182 (ILPS…GIMI).

The protein to E.coli YniB.

The protein resides in the cell membrane. Its function is as follows. Putative regulator of YfeABCD, an ABC transporter locus involved in inorganic iron transport. The protein is Putative YfeABCD regulator YfeE (yfeE) of Yersinia pestis.